Reading from the N-terminus, the 381-residue chain is Layilin (381 aa).

Residues 1-24 form the signal peptide; it reads MQPGAALQAMLLAVLLAKPRDSKG. The Extracellular portion of the chain corresponds to 25-235; sequence RLLSASDLDP…ERREAALNLA (211 aa). One can recognise a C-type lectin domain in the interval 45–185; that stretch reads TRRPCYKVIY…CNMKNNFICK (141 aa). Disulfide bonds link cysteine 71-cysteine 184 and cysteine 150-cysteine 176. Residue asparagine 117 is glycosylated (N-linked (GlcNAc...) asparagine). The helical transmembrane segment at 236-256 threads the bilayer; that stretch reads YILIPSIPLFLLLVVTSAVCW. At 257-381 the chain is on the cytoplasmic side; sequence VWICRRKREQ…SGWVENEIYY (125 aa). Phosphoserine occurs at positions 286 and 299. Residues 330 to 374 form an interaction with NF2 region; it reads DYENIAVNPSESGFVTLASMESGFVTNDIYEFSPDRMGRSKESGW. Residues 337–381 are interaction with TLN1; the sequence is NPSESGFVTLASMESGFVTNDIYEFSPDRMGRSKESGWVENEIYY. 5 repeat units span residues 340–344, 350–354, 356–359, 371–375, and 377–380. Positions 340–375 are 3 X 5 AA repeats of E-S-G-X-V; that stretch reads ESGFVTLASMESGFVTNDIYEFSPDRMGRSKESGWV. Residues 356–380 are 2 X 4 AA repeats of N-X-I-Y; it reads NDIYEFSPDRMGRSKESGWVENEIY.

In terms of assembly, interacts with TLN1. Interacts with NF2 and RDX.

It localises to the membrane. In terms of biological role, receptor for hyaluronate. This Mus musculus (Mouse) protein is Layilin (Layn).